The primary structure comprises 302 residues: uncharacterized protein (302 aa).

A run of 9 helical transmembrane segments spans residues 10–30 (VLSV…GVLG), 65–85 (LVLI…IAYL), 102–122 (VAAA…GIFG), 130–150 (IFYD…LSHI), 162–182 (AVFF…LWGL), 190–210 (ILGY…GLTL), 224–244 (LVSG…SYVL), 251–271 (FSVT…VLAI), and 282–302 (SCIF…SVVL).

The protein belongs to the auxin efflux carrier (TC 2.A.69) family.

The protein resides in the cell membrane. This is an uncharacterized protein from Methanothermobacter thermautotrophicus (strain ATCC 29096 / DSM 1053 / JCM 10044 / NBRC 100330 / Delta H) (Methanobacterium thermoautotrophicum).